The following is a 357-amino-acid chain: Holliday junction branch migration complex subunit RuvB (357 aa).

The interval 1–27 is disordered; it reads MGRFDDAGAQDAEPDDRDVSPALTVGE. The tract at residues 1-195 is large ATPase domain (RuvB-L); it reads MGRFDDAGAQ…FGFTAHMDFY (195 aa). ATP-binding positions include leucine 34, arginine 35, glycine 76, lysine 79, threonine 80, serine 81, 142–144, arginine 185, tyrosine 195, and arginine 232; that span reads EDF. Mg(2+) is bound at residue threonine 80. Residues 196 to 266 form a small ATPAse domain (RuvB-S) region; it reads EPAELERVLA…IAKAALEVYD (71 aa). Residues 269-357 form a head domain (RuvB-H) region; sequence ELGLDRLDRA…TGLGQTGLFD (89 aa). Arginine 324 and arginine 329 together coordinate DNA.

The protein belongs to the RuvB family. As to quaternary structure, homohexamer. Forms an RuvA(8)-RuvB(12)-Holliday junction (HJ) complex. HJ DNA is sandwiched between 2 RuvA tetramers; dsDNA enters through RuvA and exits via RuvB. An RuvB hexamer assembles on each DNA strand where it exits the tetramer. Each RuvB hexamer is contacted by two RuvA subunits (via domain III) on 2 adjacent RuvB subunits; this complex drives branch migration. In the full resolvosome a probable DNA-RuvA(4)-RuvB(12)-RuvC(2) complex forms which resolves the HJ.

It is found in the cytoplasm. It carries out the reaction ATP + H2O = ADP + phosphate + H(+). Its function is as follows. The RuvA-RuvB-RuvC complex processes Holliday junction (HJ) DNA during genetic recombination and DNA repair, while the RuvA-RuvB complex plays an important role in the rescue of blocked DNA replication forks via replication fork reversal (RFR). RuvA specifically binds to HJ cruciform DNA, conferring on it an open structure. The RuvB hexamer acts as an ATP-dependent pump, pulling dsDNA into and through the RuvAB complex. RuvB forms 2 homohexamers on either side of HJ DNA bound by 1 or 2 RuvA tetramers; 4 subunits per hexamer contact DNA at a time. Coordinated motions by a converter formed by DNA-disengaged RuvB subunits stimulates ATP hydrolysis and nucleotide exchange. Immobilization of the converter enables RuvB to convert the ATP-contained energy into a lever motion, pulling 2 nucleotides of DNA out of the RuvA tetramer per ATP hydrolyzed, thus driving DNA branch migration. The RuvB motors rotate together with the DNA substrate, which together with the progressing nucleotide cycle form the mechanistic basis for DNA recombination by continuous HJ branch migration. Branch migration allows RuvC to scan DNA until it finds its consensus sequence, where it cleaves and resolves cruciform DNA. In Mycobacterium sp. (strain JLS), this protein is Holliday junction branch migration complex subunit RuvB.